Consider the following 185-residue polypeptide: Peptide deformylase (185 aa).

Cysteine 109 and histidine 152 together coordinate Fe cation. Glutamate 153 is a catalytic residue. Histidine 156 provides a ligand contact to Fe cation.

It belongs to the polypeptide deformylase family. Requires Fe(2+) as cofactor.

It catalyses the reaction N-terminal N-formyl-L-methionyl-[peptide] + H2O = N-terminal L-methionyl-[peptide] + formate. Removes the formyl group from the N-terminal Met of newly synthesized proteins. Requires at least a dipeptide for an efficient rate of reaction. N-terminal L-methionine is a prerequisite for activity but the enzyme has broad specificity at other positions. In Roseiflexus sp. (strain RS-1), this protein is Peptide deformylase.